The sequence spans 2731 residues: Teneurin-1 (2731 aa).

Residues 1 to 72 form a disordered region; the sequence is MEQTDCKPYQ…KRKDVEKSTQ (72 aa). Residues 1 to 318 enclose the Teneurin N-terminal domain; that stretch reads MEQTDCKPYQ…KPYRCCNWKC (318 aa). The Cytoplasmic portion of the chain corresponds to 1-324; the sequence is MEQTDCKPYQ…NWKCTALSAT (324 aa). Positions 44–55 are enriched in basic and acidic residues; that stretch reads ETLHEYNQELRR. Residues 62–65 carry the Nuclear localization signal (NLS) motif; it reads RKRK. Phosphoserine is present on Ser-105. At Thr-109 the chain carries Phosphothreonine. At Ser-116 the chain carries Phosphoserine. Residues 175–241 form a disordered region; sequence DSAQDMQSSP…PAPPTSTQDS (67 aa). The span at 178 to 189 shows a compositional bias: polar residues; sequence QDMQSSPHNQFT. Residues 192-201 show a composition bias toward pro residues; sequence PLPPPPPPPH. Polar residues predominate over residues 214-224; that stretch reads DSLQRRSMTTR. The short motif at 290–297 is the Required for interaction with SORBS1 (Ten-1 ICD form) element; the sequence is PPPRPLPR. A helical transmembrane segment spans residues 325–345; sequence AITVTLALLLAYVIAVHLFGL. Residues 346–2731 lie on the Extracellular side of the membrane; the sequence is TWQLQPVGQI…FMRQSEIGRR (2386 aa). N-linked (GlcNAc...) asparagine glycosylation occurs at Asn-432. EGF-like domains are found at residues 527-558, 559-590, 591-623, 624-656, 657-690, 691-720, 721-752, and 760-795; these read IMDDCSTNCNGNGECISGHCHCFPGFLGPDCA, RDSCPVLCGGNGEYEKGHCVCRNGWKGPECDV, PEEQCIDPTCFGHGTCIMGVCICVPGYKGEICE, EEDCLDPMCSSHGICVKGECHCSTGWGGVNCET, PLPICQEQCSGHGTFLLDTGVCSCDPKWTGSDCS, TELCTMECGSHGVCSRGICQCEEGWVGPTC, EERSCHSHCAEHGQCKDGKCECSPGWEGDHCT, and VRDGCPGLCFGNGRCTLDQNGWHCVCQVGWSGTGCN. 22 cysteine pairs are disulfide-bonded: Cys-531/Cys-541, Cys-535/Cys-546, Cys-548/Cys-557, Cys-566/Cys-577, Cys-579/Cys-588, Cys-595/Cys-606, Cys-600/Cys-611, Cys-613/Cys-622, Cys-627/Cys-638, Cys-632/Cys-643, Cys-645/Cys-654, Cys-665/Cys-678, Cys-680/Cys-689, Cys-694/Cys-704, Cys-698/Cys-709, Cys-711/Cys-720, Cys-725/Cys-735, Cys-729/Cys-740, Cys-742/Cys-751, Cys-764/Cys-774, Cys-768/Cys-783, and Cys-785/Cys-794. N-linked (GlcNAc...) asparagine glycosylation is found at Asn-904 and Asn-1083. 5 NHL repeats span residues 1193 to 1218, 1298 to 1342, 1357 to 1408, 1420 to 1464, and 1487 to 1530; these read LFAPVALASGPDGSVYVGDFNFVRRI, SHCG…NAVI, LSCD…IAGR, FLVS…VTTN, and CFSG…ISKN. A YD 1 repeat occupies 1540–1559; sequence YEIASPADQELYQFTVNGTH. N-linked (GlcNAc...) asparagine glycosylation is found at Asn-1556 and Asn-1573. 4 YD repeats span residues 1576-1596, 1614-1638, 1639-1660, and 1661-1681; these read YNAEGDLGAITSSNGNSVHIR, YWLTISSNGVLKRVSAQGYNLALMT, YPGNTGLLATKSNENGWTTVYE, and YDPEGHLTNATFPTGEVSSFH. N-linked (GlcNAc...) asparagine glycans are attached at residues Asn-1669, Asn-1705, Asn-1743, Asn-1763, Asn-1787, and Asn-1848. 11 YD repeats span residues 1851–1870, 1871–1891, 1892–1910, 1911–1931, 1939–1955, 1956–1975, 1976–1995, 1998–2018, 2021–2041, 2091–2111, and 2119–2139; these read YSPSGLVTFIQRGTWNEKME, YDQSGKIISRTWADGKIWSYT, YLEKSVMLLLHSQRRYIFE, YDQSDCLLSVTMPSMVRHSLQ, YRNIYTPPDSSTSFIQD, YSRDGRLLQTLHLGTGRRVL, YKYTKQARLSEILYDTTQVT, YEESSGVIKTIHLMHDGFICT, YRQTGPLIGRQIFRFSEEGLV, YDLNQVITTTVMKHTKIFNAN, and YEILKAIAYWMTIQYDNMGRM. The N-linked (GlcNAc...) asparagine glycan is linked to Asn-2151. 5 YD repeats span residues 2159–2179, 2180–2200, 2202–2222, 2234–2254, and 2256–2276; these read YDADGQLQTVSVNDKIQWRYS, YDLNGNINLLSHGNSARLTPL, YDLRDRITRLGEIQYKMDEDG, YNSNGLLQKAYNKVSGWTVQY, and YDGLGRRVASKSSLGQHLQFF. Asn-2291 is a glycosylation site (N-linked (GlcNAc...) asparagine). YD repeat units lie at residues 2302–2319 and 2320–2343; these read YDLQGHLIAMELSSGEEY and YVACDNMGTPLAVFSSRGQVIKEI. Phosphoserine is present on Ser-2586. N-linked (GlcNAc...) asparagine glycosylation is present at Asn-2608.

It belongs to the tenascin family. Teneurin subfamily. Homodimer; disulfide-linked. Heterodimer with either TENM2 or TENM3. May also form heterodimer with TENM4. Ten-1 ICD interacts with SORBS1 (via third SH3 domain). Interacts with MBD1 isoform 2. Ten-1 ICD interacts with HINT1. In terms of processing, once secreted, may also be cleaved to give rise to the TCAP-1 form. Post-translationally, derives from the plasma membrane form by proteolytic processing. Further proteolytic cleavage may generate 11.9 and 4.7 kDa bioactive peptides. In terms of tissue distribution, isoform 1 and isoform 2 are expressed in the brain. Isoform 2 is expressed in the granular layer of the dentate gyrus and the pyramidal layer (Py) of the CA1, CA2 and CA3 of the hippocampus (at protein level). Expressed in the cortex, thalamus, CA1, CA2, CA3, dentate gyrus and granular layer of the hippocampus. Weakly expressed in kidney, testis and lung.

Its subcellular location is the cell membrane. It localises to the cytoplasm. It is found in the secreted. The protein localises to the nucleus. The protein resides in the nucleus speckle. Its subcellular location is the nucleus matrix. It localises to the cytoskeleton. Involved in neural development, regulating the establishment of proper connectivity within the nervous system. May function as a cellular signal transducer. Functionally, plays a role in the regulation of neuroplasticity in the limbic system. Mediates a rapid reorganization of actin- and tubulin-based cytoskeleton elements with an increase in dendritic arborization and spine density formation of neurons in the hippocampus and amygdala. Induces BDNF transcription inhibition in neurons. Activates the mitogen-activated protein (MAP) kinase 2 (MEK2) and extracellular signal-regulated kinase (ERK) cascade. Also acts as a bioactive neuroprotective peptide on limbic neurons of the brain and regulates stress-induced behavior: attenuates alkalosis-associated necrotic cell death and the effects of corticotropin-releasing factor (CRF) on c-fos/FOS induction and on the reinstatement of cocaine seeking. In terms of biological role, induces gene transcription activation. The chain is Teneurin-1 (Tenm1) from Mus musculus (Mouse).